We begin with the raw amino-acid sequence, 87 residues long: Small ribosomal subunit protein bS20 (87 aa).

The interval M1–L24 is disordered.

This sequence belongs to the bacterial ribosomal protein bS20 family.

In terms of biological role, binds directly to 16S ribosomal RNA. This Bordetella avium (strain 197N) protein is Small ribosomal subunit protein bS20.